Reading from the N-terminus, the 120-residue chain is Chaperonin GroEL (120 aa).

23–27 (DGTTT) lines the ATP pocket.

Belongs to the chaperonin (HSP60) family. Forms a cylinder of 14 subunits composed of two heptameric rings stacked back-to-back. Interacts with the co-chaperonin GroES.

The protein resides in the cytoplasm. It carries out the reaction ATP + H2O + a folded polypeptide = ADP + phosphate + an unfolded polypeptide.. Functionally, together with its co-chaperonin GroES, plays an essential role in assisting protein folding. The GroEL-GroES system forms a nano-cage that allows encapsulation of the non-native substrate proteins and provides a physical environment optimized to promote and accelerate protein folding. The protein is Chaperonin GroEL of Mycobacterium asiaticum.